Here is a 2498-residue protein sequence, read N- to C-terminus: Nuclear receptor corepressor 1 (2498 aa).

Disordered regions lie at residues 1–38, 54–84, 134–169, and 198–223; these read MSSSGYPPNQGAFSTEQGRYSSHPVQYTFPSSRHQQEY, IQQQQLRRRPSLLSEFHPVSDRPQDRRSGYD, SEVKKEQGLSSKHESSSSPLSGQPGDDQDASPSKLS, and QQQLEEEAAKPPEPEKPVSPPPVEQK. Basic and acidic residues-rich tracts occupy residues 71–82, 134–148, and 204–213; these read PVSDRPQDRRSG, SEVKKEQGLSSKHES, and EAAKPPEPEK. An interaction with tbl1xr1-A region spans residues 154-304; the sequence is SGQPGDDQDA…REQNICQRYD (151 aa). A coiled-coil region spans residues 168–208; it reads LSKEELIQSMDRVDREIAKVEQQILKLKKKQQQLEEEAAKP. Residues 427–478 form the SANT 1 domain; it reads QFMNVWTDHEKEIFKEKFVRHPKNFGLIASYLERKNVSDCVLYYYLTKKNEN. Residues 483–493 are compositionally biased toward basic residues; that stretch reads VRRNYPKRRGR. Disordered stretches follow at residues 483 to 649, 668 to 912, 1075 to 1122, 1417 to 1436, 1470 to 1583, 1737 to 1851, and 1916 to 1990; these read VRRN…GSKS, NLLQ…FGSR, SLSD…GTPG, DLVSQESRKTPESSRQIMEG, SWGV…QRES, PGTQ…AQES, and PQME…TAHT. Composition is skewed to basic and acidic residues over residues 502-525 and 535-548; these read SQEEKEIEKVEEEKADRNDKKEDE and KEELREGAKDKIDA. A coiled-coil region spans residues 502-552; that stretch reads SQEEKEIEKVEEEKADRNDKKEDERREEEEKEEKEELREGAKDKIDAVAED. The span at 582–611 shows a compositional bias: low complexity; it reads ASEAAAANAVTTATTAPVTTTSTATTVAPV. Residues 612–627 show a composition bias toward pro residues; sequence PVAPPPEEPTPPPPPQ. The SANT 2 domain maps to 628–665; sequence EQSLVDHGRNWGAIAKMVGSKSESQCKNFYFNYKRRHN. The segment covering 689 to 699 has biased composition (polar residues); the sequence is QCDSIASTVSA. The segment covering 700-719 has biased composition (acidic residues); it reads QEDDENEASNEEENPEDSEG. Low complexity-rich tracts occupy residues 727–738 and 761–774; these read ESAPSPSPAEAA and DAASKPASDSSPSP. Residues 854–863 are compositionally biased toward basic and acidic residues; it reads MERLMDRAEA. Polar residues-rich tracts occupy residues 872-891 and 1102-1122; these read QNISQARQESQPDNDSSATC and ATSSDKPSFITGGSISQGTPG. The segment covering 1484-1501 has biased composition (basic and acidic residues); that stretch reads KMGERSKHEDTKSSDAIR. The segment covering 1505–1516 has biased composition (polar residues); that stretch reads TSVVSSGPSVLR. Positions 1545 to 1558 are enriched in low complexity; it reads PSPMSRSSPMARSA. Positions 1765–1804 form a coiled coil; sequence VSAERERERERERERDREREKEQRERESDRERERDRLAHA. Residues 1767-1802 are compositionally biased toward basic and acidic residues; it reads AERERERERERERDREREKEQRERESDRERERDRLA. Low complexity-rich tracts occupy residues 1803–1813 and 1820–1835; these read HAAAAAAAASA and RPVSEQPSRPSSRPSS. Polar residues predominate over residues 1842-1851; the sequence is PSPSVRAQES. Residues 1921–1942 are compositionally biased toward basic and acidic residues; that stretch reads AKPKESKNDSARSEENLSRRNA. Over residues 1958–1980 the composition is skewed to low complexity; sequence SPYTSSSFSSSKSQSQPSSAVYS. The CORNR box 1 signature appears at 2012-2016; that stretch reads IDVII. The segment at 2022 to 2109 is disordered; it reads SDKDGRERNS…SPPQQTIPGH (88 aa). The segment covering 2031-2040 has biased composition (low complexity); sequence SQSSDASSSH. A compositionally biased stretch (basic and acidic residues) spans 2043-2052; that stretch reads HRYEAPRETI. Residues 2093 to 2106 show a composition bias toward polar residues; the sequence is RYRQQQESPPQQTI. Positions 2123–2127 match the CORNR box 2 motif; that stretch reads ICHII. Over residues 2136–2145 the composition is skewed to low complexity; sequence PVNQPLQQPP. The tract at residues 2136 to 2222 is disordered; sequence PVNQPLQQPP…PISPPQAPML (87 aa). A compositionally biased stretch (polar residues) spans 2146 to 2175; the sequence is ASTFQSTNPTSTAVRTKASSRFSPESQVQP. A compositionally biased stretch (basic and acidic residues) spans 2190–2209; sequence IPDKPRGRPGKSPDRGHISE. Positions 2326-2330 match the CORNR box 3 motif; sequence LEDII. 2 disordered regions span residues 2344–2446 and 2464–2498; these read DHGV…YNPL and TSMTQTSAHQQSRIWEREPAPLLSEQYETLSDSDE. Over residues 2353–2362 the composition is skewed to polar residues; sequence QGNQSGTPNS. Basic residues predominate over residues 2380 to 2394; it reads HKQKLISKYGSRKTK. 2 stretches are compositionally biased toward polar residues: residues 2464–2476 and 2489–2498; these read TSMTQTSAHQQSR and QYETLSDSDE.

It belongs to the N-CoR nuclear receptor corepressors family. In terms of assembly, forms a large corepressor complex that contains sin3a/b, histone deacetylases hdac1 and hdac2, rbbp4 and possibly rbbp7. Interacts with the thyroid receptor (TR, composed of rxra and thrb) and the retinoid acid receptor (RAR, composed of rxra and rara) in the absence of ligand. Interacts with tbl1xr1-A and possibly tbl1xr1-B. Interacts with zbtb33/kaiso.

It localises to the nucleus. Its function is as follows. Mediates transcriptional repression by certain nuclear receptors. Participates in complexes which promote histone deacetylation and the formation of repressive chromatin structures which may impede access by the basal transcription machinery. In association with hdac3, may play a role in the regulation of the circadian clock. In Xenopus laevis (African clawed frog), this protein is Nuclear receptor corepressor 1 (ncor1).